We begin with the raw amino-acid sequence, 270 residues long: MHTVFYVSDGTAITAEVFGHAVLSQFPLAFEQITIPFVETLEKARQVRMRIDEQFRQTGVRPILFHTIVDHQVREEVLKAQASSHDFLNTFVSPLEHELGVKAEPRLHRTHGMENRKLYDDRIEAVNFALANDDGITTKEYDEADIILIGVSRCGKTPTSLYLALQFGIRAANYPFIEQDMGVLDLPAALKANRHKLFGLTIAPQRLHEIRNQRRANSRYSSLEQCEQELACVERLFRQEAIRFLDTSSHSVEEISAKILEATGLRRQLY.

150–157 (GVSRCGKT) provides a ligand contact to ADP.

The protein belongs to the pyruvate, phosphate/water dikinase regulatory protein family. PSRP subfamily.

The catalysed reaction is [pyruvate, water dikinase] + ADP = [pyruvate, water dikinase]-phosphate + AMP + H(+). It carries out the reaction [pyruvate, water dikinase]-phosphate + phosphate + H(+) = [pyruvate, water dikinase] + diphosphate. Bifunctional serine/threonine kinase and phosphorylase involved in the regulation of the phosphoenolpyruvate synthase (PEPS) by catalyzing its phosphorylation/dephosphorylation. This is Putative phosphoenolpyruvate synthase regulatory protein from Aeromonas hydrophila subsp. hydrophila (strain ATCC 7966 / DSM 30187 / BCRC 13018 / CCUG 14551 / JCM 1027 / KCTC 2358 / NCIMB 9240 / NCTC 8049).